The following is a 243-amino-acid chain: Sec-independent protein translocase protein TATB, chloroplastic (243 aa).

The N-terminal 67 residues, 1 to 67 (MTPTANLLLP…SRTRRRNVIC (67 aa)), are a transit peptide targeting the chloroplast. At 68–69 (AS) the chain is on the lumenal side. A helical membrane pass occupies residues 70–90 (LFGVGAPEALVIGVVALLVFG). The Stromal portion of the chain corresponds to 91-243 (PKGLAEVARN…NKSQKAEGER (153 aa)). Disordered regions lie at residues 129–165 (EIGI…PAPY) and 178–243 (IAAS…EGER). 2 stretches are compositionally biased toward polar residues: residues 135–152 (VSQS…NQQP) and 187–204 (NPQQ…PTTP).

This sequence belongs to the TatB family. As to quaternary structure, in thylakoid membranes, TATC and TATB form a large receptor complex, containing about eight TATC-TATB pairs, which binds the precursor protein. Twin arginine signal peptide promotes pH-triggered docking of TATA oligomers to TATC-TATB receptor complex, inducing a conformational switch of TATA that results in activation of the translocase. TATA dissociates from TATC-TATB upon completion of translocation.

It is found in the plastid. It localises to the chloroplast thylakoid membrane. In terms of biological role, part of the twin-arginine translocation (Tat) system that transports large folded proteins containing a characteristic twin-arginine motif in their signal peptide across the thylakoid membrane. Involved in delta pH-dependent protein transport required for chloroplast development, especially thylakoid membrane formation. TATC and TATB mediate precursor recognition, whereas TATA facilitates translocation. This Zea mays (Maize) protein is Sec-independent protein translocase protein TATB, chloroplastic.